The chain runs to 442 residues: L-seryl-tRNA(Sec) selenium transferase (442 aa).

An N6-(pyridoxal phosphate)lysine modification is found at Lys284.

It belongs to the SelA family. The cofactor is pyridoxal 5'-phosphate.

It localises to the cytoplasm. It carries out the reaction L-seryl-tRNA(Sec) + selenophosphate + H(+) = L-selenocysteinyl-tRNA(Sec) + phosphate. The protein operates within aminoacyl-tRNA biosynthesis; selenocysteinyl-tRNA(Sec) biosynthesis; selenocysteinyl-tRNA(Sec) from L-seryl-tRNA(Sec) (bacterial route): step 1/1. In terms of biological role, converts seryl-tRNA(Sec) to selenocysteinyl-tRNA(Sec) required for selenoprotein biosynthesis. The sequence is that of L-seryl-tRNA(Sec) selenium transferase from Campylobacter fetus subsp. fetus (strain 82-40).